A 250-amino-acid chain; its full sequence is Ribonuclease HII (250 aa).

One can recognise an RNase H type-2 domain in the interval 66-250 (QLVAGVDEVG…SFAPVSEYEK (185 aa)). The a divalent metal cation site is built by Asp-72, Glu-73, and Asp-164.

The protein belongs to the RNase HII family. Mn(2+) is required as a cofactor. It depends on Mg(2+) as a cofactor.

The protein resides in the cytoplasm. The enzyme catalyses Endonucleolytic cleavage to 5'-phosphomonoester.. Endonuclease that specifically degrades the RNA of RNA-DNA hybrids. This Lactobacillus johnsonii (strain CNCM I-12250 / La1 / NCC 533) protein is Ribonuclease HII.